Here is a 347-residue protein sequence, read N- to C-terminus: Chlorophyll a/b light-harvesting protein PcbB (347 aa).

A run of 6 helical transmembrane segments spans residues 25-45 (GLWL…AGAI), 64-84 (LILI…GVVV), 91-111 (AIGA…IFHV), 206-226 (LASG…WHIT), 247-267 (LSSA…FSAV), and 308-328 (LCNV…WHAI).

This sequence belongs to the PsbB/PsbC family. IsiA/Pcb subfamily. The antenna complex consists of chlorophylls (a and b) and chlorophyll a/b binding proteins. It depends on chlorophyll a as a cofactor. Chlorophyll b is required as a cofactor.

It is found in the cellular thylakoid membrane. The antenna complex functions as a light receptor, it captures and delivers excitation energy to photosystems II and I. The Prochlorales pcb genes are not related to higher plant LHCs. In Prochlorothrix hollandica, this protein is Chlorophyll a/b light-harvesting protein PcbB (pcbB).